The following is a 355-amino-acid chain: N-acetyl-gamma-glutamyl-phosphate reductase (355 aa).

Residue Cys-152 is part of the active site.

The protein belongs to the NAGSA dehydrogenase family. Type 1 subfamily.

It is found in the cytoplasm. The catalysed reaction is N-acetyl-L-glutamate 5-semialdehyde + phosphate + NADP(+) = N-acetyl-L-glutamyl 5-phosphate + NADPH + H(+). It participates in amino-acid biosynthesis; L-arginine biosynthesis; N(2)-acetyl-L-ornithine from L-glutamate: step 3/4. Functionally, catalyzes the NADPH-dependent reduction of N-acetyl-5-glutamyl phosphate to yield N-acetyl-L-glutamate 5-semialdehyde. The chain is N-acetyl-gamma-glutamyl-phosphate reductase from Psychrobacter arcticus (strain DSM 17307 / VKM B-2377 / 273-4).